The sequence spans 126 residues: Aspartate 1-decarboxylase (126 aa).

S25 (schiff-base intermediate with substrate; via pyruvic acid) is an active-site residue. S25 is subject to Pyruvic acid (Ser). T57 is a binding site for substrate. Y58 (proton donor) is an active-site residue. Residue 73–75 (GAA) participates in substrate binding.

It belongs to the PanD family. As to quaternary structure, heterooctamer of four alpha and four beta subunits. The cofactor is pyruvate. In terms of processing, is synthesized initially as an inactive proenzyme, which is activated by self-cleavage at a specific serine bond to produce a beta-subunit with a hydroxyl group at its C-terminus and an alpha-subunit with a pyruvoyl group at its N-terminus.

It localises to the cytoplasm. It catalyses the reaction L-aspartate + H(+) = beta-alanine + CO2. It participates in cofactor biosynthesis; (R)-pantothenate biosynthesis; beta-alanine from L-aspartate: step 1/1. Catalyzes the pyruvoyl-dependent decarboxylation of aspartate to produce beta-alanine. This chain is Aspartate 1-decarboxylase, found in Serratia proteamaculans (strain 568).